The sequence spans 186 residues: Lipid A palmitoyltransferase PagP (186 aa).

The signal sequence occupies residues 1–25; sequence MNVSKYVAIFFFVFIQLISVGKVFA. Catalysis depends on residues His-58, Asp-101, and Ser-102.

The protein belongs to the lipid A palmitoyltransferase family. Homodimer.

Its subcellular location is the cell outer membrane. The enzyme catalyses lipid A (E. coli) + a 1-hexadecanoyl-2-acyl-sn-glycero-3-phosphocholine = hepta-acyl lipid A (E. coli) + a 2-acyl-sn-glycero-3-phosphocholine. It carries out the reaction lipid IIA + a 1-hexadecanoyl-2-acyl-sn-glycero-3-phosphocholine = lipid IIB + a 2-acyl-sn-glycero-3-phosphocholine. It catalyses the reaction lipid IVA (E. coli) + a 1-hexadecanoyl-2-acyl-sn-glycero-3-phosphocholine = lipid IVB (E. coli) + a 2-acyl-sn-glycero-3-phosphocholine. Transfers a palmitate residue from the sn-1 position of a phospholipid to the N-linked hydroxymyristate on the proximal unit of lipid A or its precursors. The protein is Lipid A palmitoyltransferase PagP of Escherichia coli O6:H1 (strain CFT073 / ATCC 700928 / UPEC).